The chain runs to 237 residues: ATP synthase subunit a (237 aa).

6 helical membrane-spanning segments follow: residues 18–38, 77–97, 103–123, 132–152, 185–205, and 209–229; these read STLW…VGTL, IFTL…PMAF, IAVT…LGFM, LFWV…IEVI, LILF…AIVA, and LEIL…CVYL.

It belongs to the ATPase A chain family. F-type ATPases have 2 components, CF(1) - the catalytic core - and CF(0) - the membrane proton channel. CF(1) has five subunits: alpha(3), beta(3), gamma(1), delta(1), epsilon(1). CF(0) has three main subunits: a(1), b(2) and c(9-12). The alpha and beta chains form an alternating ring which encloses part of the gamma chain. CF(1) is attached to CF(0) by a central stalk formed by the gamma and epsilon chains, while a peripheral stalk is formed by the delta and b chains.

Its subcellular location is the cellular chromatophore membrane. In terms of biological role, key component of the proton channel; it plays a direct role in the translocation of protons across the membrane. In Rhodobacter capsulatus (Rhodopseudomonas capsulata), this protein is ATP synthase subunit a.